Reading from the N-terminus, the 467-residue chain is Pup--protein ligase (467 aa).

Residue E12 coordinates Mg(2+). R56 contributes to the ATP binding site. Y58 is a binding site for Mg(2+). The active-site Proton acceptor is the D60. E66 contributes to the Mg(2+) binding site. ATP is bound by residues T69 and W431.

This sequence belongs to the Pup ligase/Pup deamidase family. Pup-conjugating enzyme subfamily.

It catalyses the reaction ATP + [prokaryotic ubiquitin-like protein]-L-glutamate + [protein]-L-lysine = ADP + phosphate + N(6)-([prokaryotic ubiquitin-like protein]-gamma-L-glutamyl)-[protein]-L-lysine.. It functions in the pathway protein degradation; proteasomal Pup-dependent pathway. It participates in protein modification; protein pupylation. Catalyzes the covalent attachment of the prokaryotic ubiquitin-like protein modifier Pup to the proteasomal substrate proteins, thereby targeting them for proteasomal degradation. This tagging system is termed pupylation. The ligation reaction involves the side-chain carboxylate of the C-terminal glutamate of Pup and the side-chain amino group of a substrate lysine. The chain is Pup--protein ligase from Corynebacterium jeikeium (strain K411).